A 293-amino-acid polypeptide reads, in one-letter code: Probable porphobilinogen deaminase (293 aa).

Position 233 is an S-(dipyrrolylmethanemethyl)cysteine (C233).

It belongs to the HMBS family. Dipyrromethane serves as cofactor.

It catalyses the reaction 4 porphobilinogen + H2O = hydroxymethylbilane + 4 NH4(+). It functions in the pathway porphyrin-containing compound metabolism; protoporphyrin-IX biosynthesis; coproporphyrinogen-III from 5-aminolevulinate: step 2/4. Its function is as follows. Tetrapolymerization of the monopyrrole PBG into the hydroxymethylbilane pre-uroporphyrinogen in several discrete steps. In Saccharolobus islandicus (strain Y.G.57.14 / Yellowstone #1) (Sulfolobus islandicus), this protein is Probable porphobilinogen deaminase.